The following is a 289-amino-acid chain: ATP synthase gamma chain (289 aa).

This sequence belongs to the ATPase gamma chain family. As to quaternary structure, F-type ATPases have 2 components, CF(1) - the catalytic core - and CF(0) - the membrane proton channel. CF(1) has five subunits: alpha(3), beta(3), gamma(1), delta(1), epsilon(1). CF(0) has three main subunits: a, b and c.

The protein localises to the cell inner membrane. Functionally, produces ATP from ADP in the presence of a proton gradient across the membrane. The gamma chain is believed to be important in regulating ATPase activity and the flow of protons through the CF(0) complex. The sequence is that of ATP synthase gamma chain from Coxiella burnetii (strain Dugway 5J108-111).